Here is a 252-residue protein sequence, read N- to C-terminus: 2-succinyl-6-hydroxy-2,4-cyclohexadiene-1-carboxylate synthase (252 aa).

The protein belongs to the AB hydrolase superfamily. MenH family. As to quaternary structure, monomer.

It carries out the reaction 5-enolpyruvoyl-6-hydroxy-2-succinyl-cyclohex-3-ene-1-carboxylate = (1R,6R)-6-hydroxy-2-succinyl-cyclohexa-2,4-diene-1-carboxylate + pyruvate. It functions in the pathway quinol/quinone metabolism; 1,4-dihydroxy-2-naphthoate biosynthesis; 1,4-dihydroxy-2-naphthoate from chorismate: step 3/7. It participates in quinol/quinone metabolism; menaquinone biosynthesis. Functionally, catalyzes a proton abstraction reaction that results in 2,5-elimination of pyruvate from 2-succinyl-5-enolpyruvyl-6-hydroxy-3-cyclohexene-1-carboxylate (SEPHCHC) and the formation of 2-succinyl-6-hydroxy-2,4-cyclohexadiene-1-carboxylate (SHCHC). This Salmonella arizonae (strain ATCC BAA-731 / CDC346-86 / RSK2980) protein is 2-succinyl-6-hydroxy-2,4-cyclohexadiene-1-carboxylate synthase.